The sequence spans 409 residues: Phosphopentomutase (409 aa).

Mn(2+) contacts are provided by Asp10, Asp302, His307, Asp343, His344, and His355.

Belongs to the phosphopentomutase family. Mn(2+) serves as cofactor.

The protein localises to the cytoplasm. The enzyme catalyses 2-deoxy-alpha-D-ribose 1-phosphate = 2-deoxy-D-ribose 5-phosphate. It catalyses the reaction alpha-D-ribose 1-phosphate = D-ribose 5-phosphate. Its pathway is carbohydrate degradation; 2-deoxy-D-ribose 1-phosphate degradation; D-glyceraldehyde 3-phosphate and acetaldehyde from 2-deoxy-alpha-D-ribose 1-phosphate: step 1/2. Isomerase that catalyzes the conversion of deoxy-ribose 1-phosphate (dRib-1-P) and ribose 1-phosphate (Rib-1-P) to deoxy-ribose 5-phosphate (dRib-5-P) and ribose 5-phosphate (Rib-5-P), respectively. The polypeptide is Phosphopentomutase (Chelativorans sp. (strain BNC1)).